A 311-amino-acid polypeptide reads, in one-letter code: R2-like ligand binding oxidase (311 aa).

Residues Glu68, Glu101, and His104 each coordinate Mn(2+). Positions 71 to 162 (VTQDIQPFMA…AAQVRASVTY (92 aa)) form a cross-link, 3-(O4'-tyrosyl)-valine (Val-Tyr). Residue Glu101 participates in Fe cation binding. Glu167, Glu202, and His205 together coordinate Fe cation.

Belongs to the ribonucleoside diphosphate reductase small chain family. R2-like ligand binding oxidase subfamily. Homodimer. It depends on Fe cation as a cofactor. Requires Mn(2+) as cofactor.

In terms of biological role, probable oxidase that might be involved in lipid metabolism. The polypeptide is R2-like ligand binding oxidase (Mycobacterium avium (strain 104)).